Here is a 523-residue protein sequence, read N- to C-terminus: MAAHRRWLLMSFLFLEVILLEAAKILTISTLSASHYIVISRVSQVLHEGGHNVTKLLYESANIPDFRKEKPSYQVINWRPPEDQEKKFADLRHRLTEEITYGRSKHHTLLKIHQYFGDLCSQLLSRKDIMDFLKNENFDLVLLDSMDLCSLLIVEKLGKRFVSFLPFQFSYMDFGLPSAPLSYAPVYGSGLTDQMDFWGRVKNFLMFLDFSMKQREILSQYDSTIQEHFVEGSQPVLSDLLLKAELWFVNSDFALDFARPLFPNTVYVGGLLDKPVQPIPQDLENFISQFGDSGFVLVALGSIVSMIQSKEIIKEMNSAFAHLPQGVLWTCKTSHWPKDVSLAPNVKIMDWLPQTDLLAHPSIRLFVTHGGMNSVMEAVHHGVPMVGIPFFFDQPENMVRVEAKNLGVSIQLQTLKAESFALTMKKIIEDKRYKSAAMASKIIRHSHPLTPAQRLLGWIDHILQTGGAAHLKPYAFQQPWHEQYMLDVFLFLLGLMLGTLWLSVKVLVAVTRYLSIATKVKEA.

Positions 1 to 22 (MAAHRRWLLMSFLFLEVILLEA) are cleaved as a signal peptide. At 23–487 (AKILTISTLS…QPWHEQYMLD (465 aa)) the chain is on the extracellular side. Asn-52 carries an N-linked (GlcNAc...) asparagine glycan. The chain crosses the membrane as a helical span at residues 488–508 (VFLFLLGLMLGTLWLSVKVLV). The Cytoplasmic segment spans residues 509–523 (AVTRYLSIATKVKEA).

Belongs to the UDP-glycosyltransferase family. Highly expressed in kidney, while it is expressed at low levels in liver. Not detected in other tissues examined.

The protein resides in the membrane. It carries out the reaction glucuronate acceptor + UDP-alpha-D-glucuronate = acceptor beta-D-glucuronoside + UDP + H(+). Its function is as follows. UDP-glucuronosyltransferases catalyze phase II biotransformation reactions in which lipophilic substrates are conjugated with glucuronic acid to increase water solubility and enhance excretion. They are of major importance in the conjugation and subsequent elimination of potentially toxic xenobiotics and endogenous compounds. The sequence is that of UDP-glucuronosyltransferase 3A2 (Ugt3a2) from Mus musculus (Mouse).